The sequence spans 122 residues: Large ribosomal subunit protein uL14 (122 aa).

The protein belongs to the universal ribosomal protein uL14 family. Part of the 50S ribosomal subunit. Forms a cluster with proteins L3 and L19. In the 70S ribosome, L14 and L19 interact and together make contacts with the 16S rRNA in bridges B5 and B8.

In terms of biological role, binds to 23S rRNA. Forms part of two intersubunit bridges in the 70S ribosome. In Nocardioides sp. (strain ATCC BAA-499 / JS614), this protein is Large ribosomal subunit protein uL14.